We begin with the raw amino-acid sequence, 178 residues long: Large ribosomal subunit protein bL25 (178 aa).

It belongs to the bacterial ribosomal protein bL25 family. CTC subfamily. Part of the 50S ribosomal subunit; part of the 5S rRNA/L5/L18/L25 subcomplex. Contacts the 5S rRNA. Binds to the 5S rRNA independently of L5 and L18.

Functionally, this is one of the proteins that binds to the 5S RNA in the ribosome where it forms part of the central protuberance. This Helicobacter acinonychis (strain Sheeba) protein is Large ribosomal subunit protein bL25.